The sequence spans 194 residues: dCTP deaminase (194 aa).

DCTP-binding positions include R110 to R115, D128, V136 to E138, Y171, K178, and Q182. E138 (proton donor/acceptor) is an active-site residue.

Belongs to the dCTP deaminase family. In terms of assembly, homotrimer.

The catalysed reaction is dCTP + H2O + H(+) = dUTP + NH4(+). It functions in the pathway pyrimidine metabolism; dUMP biosynthesis; dUMP from dCTP (dUTP route): step 1/2. In terms of biological role, catalyzes the deamination of dCTP to dUTP. This chain is dCTP deaminase, found in Psychromonas ingrahamii (strain DSM 17664 / CCUG 51855 / 37).